Consider the following 286-residue polypeptide: Bifunctional protein FolD (286 aa).

Residues 167-169 and Ile-233 contribute to the NADP(+) site; that span reads GRS.

Belongs to the tetrahydrofolate dehydrogenase/cyclohydrolase family. In terms of assembly, homodimer.

It catalyses the reaction (6R)-5,10-methylene-5,6,7,8-tetrahydrofolate + NADP(+) = (6R)-5,10-methenyltetrahydrofolate + NADPH. The enzyme catalyses (6R)-5,10-methenyltetrahydrofolate + H2O = (6R)-10-formyltetrahydrofolate + H(+). It functions in the pathway one-carbon metabolism; tetrahydrofolate interconversion. In terms of biological role, catalyzes the oxidation of 5,10-methylenetetrahydrofolate to 5,10-methenyltetrahydrofolate and then the hydrolysis of 5,10-methenyltetrahydrofolate to 10-formyltetrahydrofolate. The protein is Bifunctional protein FolD of Limosilactobacillus reuteri (strain DSM 20016) (Lactobacillus reuteri).